The chain runs to 460 residues: Armadillo repeat-containing protein LFR (460 aa).

Over residues 1–10 (MSHVRSAPAG) the composition is skewed to low complexity. Residues 1-32 (MSHVRSAPAGKSGGGGGSTPAKRGRPFGSTTG) form a disordered region. ARM repeat units lie at residues 225-267 (ENET…NLAP), 321-360 (NEPF…NVAE), and 364-405 (DFRL…SLVS).

As to quaternary structure, interacts with CHR719, SWI3A and SWI3C. In terms of tissue distribution, expressed at low levels in coleoptiles, leaf tongues, mature leaves and nodes during the vegetative phase. Highly expressed in reproductive tissues such as young panicles, early developing seeds, embryos and endosperms.

The protein localises to the nucleus. Functionally, plays critical roles in both embryo and endosperm development. Required for free nuclei division and cellularization in early endosperm development, by preventing premature cell death in the endosperm. Involved in the regulation of pattern formation and organ differentiation during embryogenesis, by regulating genes involved in the early stages of seed development. This Oryza sativa subsp. japonica (Rice) protein is Armadillo repeat-containing protein LFR.